The chain runs to 625 residues: Autophagy-related protein 20 (625 aa).

Residues 1-59 are disordered; it reads MNPNDNNLFGDIEQDNNPSFYGNQSFLRDPYGKSKQTCPPSVTSNGDPSITNDDNNSAH. Composition is skewed to polar residues over residues 15–26 and 34–59; these read DNNPSFYGNQSF and SKQTCPPSVTSNGDPSITNDDNNSAH. The PX domain occupies 79–202; the sequence is NDPNLQINVI…HKFLDPNYEL (124 aa). Residues Arg-118, Ser-120, Lys-144, and Arg-167 each contribute to the a 1,2-diacyl-sn-glycero-3-phospho-(1D-myo-inositol-3-phosphate) site.

It belongs to the sorting nexin family.

It is found in the endosome membrane. Its subcellular location is the preautophagosomal structure membrane. Required for cytoplasm to vacuole transport (Cvt), pexophagy and mitophagy. Also involved in endoplasmic reticulum-specific autophagic process and is essential for the survival of cells subjected to severe ER stress. Functions in protein retrieval from the endocytic pathway. The protein is Autophagy-related protein 20 (ATG20) of Debaryomyces hansenii (strain ATCC 36239 / CBS 767 / BCRC 21394 / JCM 1990 / NBRC 0083 / IGC 2968) (Yeast).